The chain runs to 124 residues: Small polypeptide ROTUNDIFOLIA LIKE 3 (124 aa).

The interval 1-25 is disordered; sequence MEDERWKLSSSKGRSKSGRSCSSSS. Residues Asn-35 and Asn-38 are each glycosylated (N-linked (GlcNAc...) asparagine). Residues 59 to 75 form a helical membrane-spanning segment; sequence AWSAAGAGGGGASSSSS. The interval 60-95 is disordered; it reads WSAAGAGGGGASSSSSSQHQHQQQQQQSNNSQRLSK. A compositionally biased stretch (low complexity) spans 71-91; that stretch reads SSSSSSQHQHQQQQQQSNNSQ. N-linked (GlcNAc...) asparagine glycosylation is present at Asn-88. Residues 92-124 are required for DVL/RTFL small polypeptide activity; sequence RLSKKCVEAVKEHRARFYIVRRCVSMLVCWRDY.

The protein belongs to the DVL/RTFL small polypeptides family.

It localises to the cell membrane. Small polypeptide acting as a regulatory molecule which coordinates cellular responses required for differentiation, growth and development, probably by restricting polar cell proliferation in lateral organs (e.g. leaves and petioles). In Oryza sativa subsp. indica (Rice), this protein is Small polypeptide ROTUNDIFOLIA LIKE 3.